A 115-amino-acid chain; its full sequence is Large ribosomal subunit protein bL21 (115 aa).

Belongs to the bacterial ribosomal protein bL21 family. As to quaternary structure, part of the 50S ribosomal subunit. Contacts protein L20.

Its function is as follows. This protein binds to 23S rRNA in the presence of protein L20. In Coxiella burnetii (strain RSA 331 / Henzerling II), this protein is Large ribosomal subunit protein bL21.